Here is a 198-residue protein sequence, read N- to C-terminus: Glycerol-3-phosphate acyltransferase 1 (198 aa).

Transmembrane regions (helical) follow at residues 5–25 (ALLA…AWLA), 52–72 (GPAL…VLLA), 81–101 (WAAL…FLAF), 111–131 (FGVI…LAIA), and 138–158 (FVSA…LVLP).

The protein belongs to the PlsY family. In terms of assembly, probably interacts with PlsX.

It is found in the cell membrane. The catalysed reaction is an acyl phosphate + sn-glycerol 3-phosphate = a 1-acyl-sn-glycero-3-phosphate + phosphate. It functions in the pathway lipid metabolism; phospholipid metabolism. In terms of biological role, catalyzes the transfer of an acyl group from acyl-phosphate (acyl-PO(4)) to glycerol-3-phosphate (G3P) to form lysophosphatidic acid (LPA). This enzyme utilizes acyl-phosphate as fatty acyl donor, but not acyl-CoA or acyl-ACP. In Deinococcus radiodurans (strain ATCC 13939 / DSM 20539 / JCM 16871 / CCUG 27074 / LMG 4051 / NBRC 15346 / NCIMB 9279 / VKM B-1422 / R1), this protein is Glycerol-3-phosphate acyltransferase 1.